Consider the following 273-residue polypeptide: Ribosomal RNA small subunit methyltransferase A (273 aa).

S-adenosyl-L-methionine contacts are provided by asparagine 18, leucine 20, glycine 45, glutamate 66, aspartate 91, and asparagine 113.

It belongs to the class I-like SAM-binding methyltransferase superfamily. rRNA adenine N(6)-methyltransferase family. RsmA subfamily.

The protein resides in the cytoplasm. It carries out the reaction adenosine(1518)/adenosine(1519) in 16S rRNA + 4 S-adenosyl-L-methionine = N(6)-dimethyladenosine(1518)/N(6)-dimethyladenosine(1519) in 16S rRNA + 4 S-adenosyl-L-homocysteine + 4 H(+). Specifically dimethylates two adjacent adenosines (A1518 and A1519) in the loop of a conserved hairpin near the 3'-end of 16S rRNA in the 30S particle. May play a critical role in biogenesis of 30S subunits. This chain is Ribosomal RNA small subunit methyltransferase A, found in Escherichia coli O1:K1 / APEC.